A 244-amino-acid polypeptide reads, in one-letter code: Transcriptional activator protein CarR (244 aa).

Residues aspartate 162–asparagine 227 enclose the HTH luxR-type domain. The H-T-H motif DNA-binding region spans tyrosine 186 to asparagine 205.

This sequence belongs to the autoinducer-regulated transcriptional regulatory protein family.

In terms of biological role, functions as an OHLL responsive transcriptional regulator which acts in the control of the biosynthesis of carbapenem antibiotics. In Pectobacterium carotovorum subsp. carotovorum (Erwinia carotovora subsp. carotovora), this protein is Transcriptional activator protein CarR (carR).